The following is a 692-amino-acid chain: Elongation factor G (692 aa).

One can recognise a tr-type G domain in the interval asparagine 8–threonine 283. GTP contacts are provided by residues alanine 17 to threonine 24, aspartate 81 to histidine 85, and asparagine 135 to aspartate 138.

It belongs to the TRAFAC class translation factor GTPase superfamily. Classic translation factor GTPase family. EF-G/EF-2 subfamily.

It is found in the cytoplasm. Its function is as follows. Catalyzes the GTP-dependent ribosomal translocation step during translation elongation. During this step, the ribosome changes from the pre-translocational (PRE) to the post-translocational (POST) state as the newly formed A-site-bound peptidyl-tRNA and P-site-bound deacylated tRNA move to the P and E sites, respectively. Catalyzes the coordinated movement of the two tRNA molecules, the mRNA and conformational changes in the ribosome. The sequence is that of Elongation factor G from Helicobacter pylori (strain Shi470).